The following is a 162-amino-acid chain: Probable chemoreceptor glutamine deamidase CheD 2 (162 aa).

Belongs to the CheD family.

It catalyses the reaction L-glutaminyl-[protein] + H2O = L-glutamyl-[protein] + NH4(+). Functionally, probably deamidates glutamine residues to glutamate on methyl-accepting chemotaxis receptors (MCPs), playing an important role in chemotaxis. The sequence is that of Probable chemoreceptor glutamine deamidase CheD 2 from Geobacter metallireducens (strain ATCC 53774 / DSM 7210 / GS-15).